The sequence spans 221 residues: Retinitis pigmentosa 9 protein (221 aa).

3 stretches are compositionally biased toward basic and acidic residues: residues 1–10 (MSSRPGREDV), 17–29 (RPREPPEQELQRR), and 60–69 (IKEDETKPED). Residues 1-76 (MSSRPGREDV…PEDCIPDVPG (76 aa)) are disordered. The PIM1-binding stretch occupies residues 1-155 (MSSRPGREDV…RDNKRHEKDV (155 aa)). The segment at 104–122 (QCWRCKRYGHRTGDKECPF) adopts a CCHC-type zinc-finger fold. Lysine 129 is covalently cross-linked (Glycyl lysine isopeptide (Lys-Gly) (interchain with G-Cter in SUMO2)). The span at 147–156 (DNKRHEKDVR) shows a compositional bias: basic and acidic residues. Positions 147-221 (DNKRHEKDVR…SKSNEGSDSE (75 aa)) are disordered. The segment covering 184-212 (KHKKKKKKEKHKKRKKEKKKKKKRKHKSS) has biased composition (basic residues). A phosphoserine; by PIM1 mark is found at serine 212 and serine 214.

Binds to PIM1. Binds to ZNHIT4. Appears to be expressed in a wide range of tissues.

The protein resides in the nucleus. In terms of biological role, is thought to be a target protein for the PIM1 kinase. May play some roles in B-cell proliferation in association with PIM1. The polypeptide is Retinitis pigmentosa 9 protein (RP9) (Homo sapiens (Human)).